A 283-amino-acid polypeptide reads, in one-letter code: Pantothenate synthetase (283 aa).

Position 26–33 (M26–H33) interacts with ATP. Residue H33 is the Proton donor of the active site. Q57 provides a ligand contact to (R)-pantoate. Q57 provides a ligand contact to beta-alanine. G148–D151 provides a ligand contact to ATP. Q154 is a (R)-pantoate binding site. Residue L185–R188 participates in ATP binding.

The protein belongs to the pantothenate synthetase family. As to quaternary structure, homodimer.

It localises to the cytoplasm. It catalyses the reaction (R)-pantoate + beta-alanine + ATP = (R)-pantothenate + AMP + diphosphate + H(+). Its pathway is cofactor biosynthesis; (R)-pantothenate biosynthesis; (R)-pantothenate from (R)-pantoate and beta-alanine: step 1/1. Functionally, catalyzes the condensation of pantoate with beta-alanine in an ATP-dependent reaction via a pantoyl-adenylate intermediate. This Polaromonas naphthalenivorans (strain CJ2) protein is Pantothenate synthetase.